We begin with the raw amino-acid sequence, 72 residues long: Large ribosomal subunit protein bL28 (72 aa).

It belongs to the bacterial ribosomal protein bL28 family.

In Pelodictyon phaeoclathratiforme (strain DSM 5477 / BU-1), this protein is Large ribosomal subunit protein bL28.